A 439-amino-acid chain; its full sequence is Glucose-1-phosphate adenylyltransferase (439 aa).

Alpha-D-glucose 1-phosphate contacts are provided by residues Gly-172, 187–188 (EK), and Ser-219.

Belongs to the bacterial/plant glucose-1-phosphate adenylyltransferase family. Homotetramer.

It catalyses the reaction alpha-D-glucose 1-phosphate + ATP + H(+) = ADP-alpha-D-glucose + diphosphate. The protein operates within glycan biosynthesis; glycogen biosynthesis. Its function is as follows. Involved in the biosynthesis of ADP-glucose, a building block required for the elongation reactions to produce glycogen. Catalyzes the reaction between ATP and alpha-D-glucose 1-phosphate (G1P) to produce pyrophosphate and ADP-Glc. The protein is Glucose-1-phosphate adenylyltransferase of Synechocystis sp. (strain ATCC 27184 / PCC 6803 / Kazusa).